The following is a 595-amino-acid chain: Elongation factor 4 (595 aa).

Residues 1–183 enclose the tr-type G domain; that stretch reads MNVRNFSIIA…AIVERIPPPP (183 aa). Residues 13–18 and 130–133 each bind GTP; these read DHGKST and NKID.

The protein belongs to the TRAFAC class translation factor GTPase superfamily. Classic translation factor GTPase family. LepA subfamily.

It localises to the cell membrane. The catalysed reaction is GTP + H2O = GDP + phosphate + H(+). Required for accurate and efficient protein synthesis under certain stress conditions. May act as a fidelity factor of the translation reaction, by catalyzing a one-codon backward translocation of tRNAs on improperly translocated ribosomes. Back-translocation proceeds from a post-translocation (POST) complex to a pre-translocation (PRE) complex, thus giving elongation factor G a second chance to translocate the tRNAs correctly. Binds to ribosomes in a GTP-dependent manner. The sequence is that of Elongation factor 4 from Deinococcus geothermalis (strain DSM 11300 / CIP 105573 / AG-3a).